The following is a 238-amino-acid chain: Orotidine 5'-phosphate decarboxylase (238 aa).

Substrate contacts are provided by residues D10, K32, 59–68, T122, R184, Q193, G213, and R214; that span reads DLKLHDIPNT. Catalysis depends on K61, which acts as the Proton donor.

This sequence belongs to the OMP decarboxylase family. Type 1 subfamily. As to quaternary structure, homodimer.

It catalyses the reaction orotidine 5'-phosphate + H(+) = UMP + CO2. It participates in pyrimidine metabolism; UMP biosynthesis via de novo pathway; UMP from orotate: step 2/2. Catalyzes the decarboxylation of orotidine 5'-monophosphate (OMP) to uridine 5'-monophosphate (UMP). The polypeptide is Orotidine 5'-phosphate decarboxylase (Bacillus thuringiensis subsp. konkukian (strain 97-27)).